The sequence spans 67 residues: MKVTAVLMVAVLVLTACQLTTANTTDYVRRIPARKSTMSRRECSESGEWCGLDPALCCGSSCFFTCN.

An N-terminal signal peptide occupies residues 1–24; the sequence is MKVTAVLMVAVLVLTACQLTTANT. Residues 25-39 constitute a propeptide that is removed on maturation; sequence TDYVRRIPARKSTMS. Cystine bridges form between Cys43-Cys58, Cys50-Cys62, and Cys57-Cys66.

Belongs to the conotoxin O1 superfamily. In terms of tissue distribution, expressed by the venom duct.

It localises to the secreted. The protein is Conotoxin Cl6.7 of Californiconus californicus (California cone).